The chain runs to 381 residues: MPSLQDYHVPYPAAAPGQVRKVIYLPRQNPTVEQQHLRVQIIPGRHENCDDGRLYKLTGSVTEETLQGWGYSYYVVTLGDIYAAHRSSSDPARATTFVALDESPVIAYNSKLPIVVYVPEGAELRYRIWTDDASLAQSIQQKPEAPALPQPHLVPVTEGQECPQELPRCGAPSEYVRQDYKASMLSVEEVHRLSNNTPPLIPSAVHESAHEAHAAPPLHSAVLEEHGRPGMEHLEVCPKNNGSEGREQPAEEASTLKQRSSSSSSNPRHHSANESSPSRPRLSSTAYWPQENSKTKRSPSATHKPRRSTDSAAIEETGVGTPKKNRSSSGSASNKRKAEDDVYEKTMKNFWNRARSDSPRKASASSTKSGNGSKADPVDGK.

The disordered stretch occupies residues 232–381; sequence EHLEVCPKNN…GSKADPVDGK (150 aa). The segment covering 273–292 has biased composition (polar residues); that stretch reads NESSPSRPRLSSTAYWPQEN. A compositionally biased stretch (basic and acidic residues) spans 336 to 347; it reads RKAEDDVYEKTM. The span at 363-372 shows a compositional bias: polar residues; it reads SASSTKSGNG.

This sequence belongs to the protease inhibitor I11 (ecotin) family.

In Leishmania major, this protein is Ecotin-like protein 3.